Consider the following 919-residue polypeptide: Glutamate receptor ionotropic, kainate 3 (919 aa).

The N-terminal stretch at 1 to 31 (MTAPWRRLRSLVWEYWAGLLVCAFWIPDSRG) is a signal peptide. Residues 32 to 563 (MPHVIRIGGI…VFSFLNPLSP (532 aa)) are Extracellular-facing. N-linked (GlcNAc...) asparagine glycosylation is found at Asn70, Asn76, Asn278, Asn381, Asn415, Asn426, and Asn433. Cys99 and Cys350 form a disulfide bridge. Residues Pro518, Thr520, and Arg525 each contribute to the L-glutamate site. 2 N-linked (GlcNAc...) asparagine glycosylation sites follow: Asn548 and Asn551. Residues 564–584 (DIWMYVLLAYLGVSCVLFVIA) form a helical membrane-spanning segment. The Cytoplasmic segment spans residues 585–636 (RFSPYEWYDAHPCNPGSEVVENNFTLLNSFWFGMGSLMQQGSELMPKALSTR). Residues 637 to 657 (IIGGIWWFFTLIIISSYTANL) traverse the membrane as a helical segment. Topologically, residues 658 to 820 (AAFLTVERME…KEASALGIQK (163 aa)) are extracellular. The L-glutamate site is built by Ala691, Thr692, and Glu739. N-linked (GlcNAc...) asparagine glycosylation occurs at Asn752. The helical transmembrane segment at 821–841 (IGGIFIVLAAGLVLSVLVAVG) threads the bilayer. Residues 842–919 (EFVYKLRKTA…CSTSLAPVFP (78 aa)) are Cytoplasmic-facing. Ser869 is modified (phosphoserine). Residue Lys887 forms a Glycyl lysine isopeptide (Lys-Gly) (interchain with G-Cter in SUMO1) linkage.

This sequence belongs to the glutamate-gated ion channel (TC 1.A.10.1) family. GRIK3 subfamily. Homotetramer, and heterotetramer with either GRIK4 or GRIK5. Can form functional heteromeric receptors with GRIK2. Interacts with PRKCABP. Interacts with NETO2.

The protein localises to the cell membrane. It localises to the postsynaptic cell membrane. The catalysed reaction is Ca(2+)(in) = Ca(2+)(out). Functionally, ionotropic glutamate receptor that functions as a cation-permeable ligand-gated ion channel, gated by L-glutamate and the glutamatergic agonist kainic acid. Binding of the excitatory neurotransmitter L-glutamate induces a conformation change, leading to the opening of the cation channel, and thereby converts the chemical signal to an electrical impulse. The receptor then desensitizes rapidly and enters a transient inactive state, characterized by the presence of bound agonist. In association with GRIK2, involved in presynaptic facilitation of glutamate release at hippocampal mossy fiber synapses. This is Glutamate receptor ionotropic, kainate 3 (GRIK3) from Homo sapiens (Human).